We begin with the raw amino-acid sequence, 300 residues long: Tyrosine phosphatase-like protein J1 (300 aa).

Positions L27 to F294 constitute a Tyrosine-protein phosphatase domain.

This sequence belongs to the protein-tyrosine phosphatase family.

This Microplitis demolitor (Parasitoid wasp) protein is Tyrosine phosphatase-like protein J1 (J1).